A 510-amino-acid chain; its full sequence is Replication factor C large subunit (510 aa).

48 to 55 (GPPGTGKT) provides a ligand contact to ATP. A disordered region spans residues 459–510 (MESMLERKREESEVEEEAKEIEEAVEKAEEEEEREEKKKEGGGEQRTLDAFF). Basic and acidic residues predominate over residues 493–510 (EEKKKEGGGEQRTLDAFF).

The protein belongs to the activator 1 small subunits family. RfcL subfamily. In terms of assembly, heteromultimer composed of small subunits (RfcS) and large subunits (RfcL).

Functionally, part of the RFC clamp loader complex which loads the PCNA sliding clamp onto DNA. The sequence is that of Replication factor C large subunit from Methanopyrus kandleri (strain AV19 / DSM 6324 / JCM 9639 / NBRC 100938).